We begin with the raw amino-acid sequence, 712 residues long: Glycine--tRNA ligase beta subunit (712 aa).

Belongs to the class-II aminoacyl-tRNA synthetase family. As to quaternary structure, tetramer of two alpha and two beta subunits.

It is found in the cytoplasm. The catalysed reaction is tRNA(Gly) + glycine + ATP = glycyl-tRNA(Gly) + AMP + diphosphate. The protein is Glycine--tRNA ligase beta subunit of Dechloromonas aromatica (strain RCB).